The chain runs to 97 residues: MSTTAELAELHDLVGGLRRCVTALKARFGDNPATRRIVIDADRILTDIELLDTDVSELDLERAAVPQPSEKIAIPDTEYDREFWRDVDDEGVGGHRY.

N-acetylserine is present on Ser-2.

This is an uncharacterized protein from Mycobacterium tuberculosis (strain ATCC 25618 / H37Rv).